Here is a 72-residue protein sequence, read N- to C-terminus: Translation initiation factor IF-1 (72 aa).

The region spanning M1–R72 is the S1-like domain.

It belongs to the IF-1 family. As to quaternary structure, component of the 30S ribosomal translation pre-initiation complex which assembles on the 30S ribosome in the order IF-2 and IF-3, IF-1 and N-formylmethionyl-tRNA(fMet); mRNA recruitment can occur at any time during PIC assembly.

It is found in the cytoplasm. One of the essential components for the initiation of protein synthesis. Stabilizes the binding of IF-2 and IF-3 on the 30S subunit to which N-formylmethionyl-tRNA(fMet) subsequently binds. Helps modulate mRNA selection, yielding the 30S pre-initiation complex (PIC). Upon addition of the 50S ribosomal subunit IF-1, IF-2 and IF-3 are released leaving the mature 70S translation initiation complex. The polypeptide is Translation initiation factor IF-1 (Actinobacillus pleuropneumoniae serotype 5b (strain L20)).